A 93-amino-acid polypeptide reads, in one-letter code: Protein salt-induced and EIN3/EIL1-dependent 1 (93 aa).

Low complexity predominate over residues 23-36 (SSLLTESSSSSLCS). Residues 23-46 (SSLLTESSSSSLCSEEAEGGGGEA) are disordered.

Triggered by EIN3. Its function is as follows. Involved in ethylene-dependent salt stress responses by reducing reactive oxygen species (ROS) accumulation. This Arabidopsis thaliana (Mouse-ear cress) protein is Protein salt-induced and EIN3/EIL1-dependent 1.